The sequence spans 628 residues: tRNA uridine 5-carboxymethylaminomethyl modification enzyme MnmG 1 (628 aa).

11–16 (GAGHAG) is a binding site for FAD. Residue 280–294 (GPRHCPSIDRKVLNF) participates in NAD(+) binding.

The protein belongs to the MnmG family. In terms of assembly, homodimer. Heterotetramer of two MnmE and two MnmG subunits. FAD serves as cofactor.

It localises to the cytoplasm. Its function is as follows. NAD-binding protein involved in the addition of a carboxymethylaminomethyl (cmnm) group at the wobble position (U34) of certain tRNAs, forming tRNA-cmnm(5)s(2)U34. In Fusobacterium nucleatum subsp. nucleatum (strain ATCC 25586 / DSM 15643 / BCRC 10681 / CIP 101130 / JCM 8532 / KCTC 2640 / LMG 13131 / VPI 4355), this protein is tRNA uridine 5-carboxymethylaminomethyl modification enzyme MnmG 1.